The primary structure comprises 330 residues: Phenylalanine--tRNA ligase alpha subunit (330 aa).

Residue Glu246 participates in Mg(2+) binding.

This sequence belongs to the class-II aminoacyl-tRNA synthetase family. Phe-tRNA synthetase alpha subunit type 1 subfamily. Tetramer of two alpha and two beta subunits. Mg(2+) is required as a cofactor.

The protein resides in the cytoplasm. The enzyme catalyses tRNA(Phe) + L-phenylalanine + ATP = L-phenylalanyl-tRNA(Phe) + AMP + diphosphate + H(+). The chain is Phenylalanine--tRNA ligase alpha subunit from Wolinella succinogenes (strain ATCC 29543 / DSM 1740 / CCUG 13145 / JCM 31913 / LMG 7466 / NCTC 11488 / FDC 602W) (Vibrio succinogenes).